The primary structure comprises 109 residues: Cortistatin (109 aa).

The signal sequence occupies residues 1 to 25; the sequence is MMGGRGTGGKWPSAFGLLLLWGVAA. Residues 26 to 93 constitute a propeptide that is removed on maturation; that stretch reads SALPLESGPT…PPPQQPPHLD (68 aa). The segment at 64–97 is disordered; the sequence is ASSSTPVGGGTPGLSKSQERPPPQQPPHLDKKPC. A disulfide bond links C97 and C108.

The protein belongs to the somatostatin family. In terms of tissue distribution, expressed in a subset of GABAergic cells in the cortex and hippocampus.

The protein resides in the secreted. This Mus musculus (Mouse) protein is Cortistatin (Cort).